The sequence spans 617 residues: Kelch-like protein 9 (617 aa).

The 70-residue stretch at 50–119 folds into the BTB domain; the sequence is CDVTLVPGDG…IYTAKLSLNM (70 aa). The 102-residue stretch at 154-255 folds into the BACK domain; the sequence is CVEVGRIANT…TPQDLINYVQ (102 aa). 6 Kelch repeats span residues 299–347, 348–399, 400–446, 448–493, 495–545, and 546–594; these read HLVT…VIGN, FLYV…ALKG, HLYA…VYGG, MYIS…TVGD, LYVI…VFEN, and KIYV…TLTV. Residues 595–617 are disordered; the sequence is FPPEENPGSPSRESPLSAPSDHS.

In terms of assembly, component of the BCR(KLHL9-KLHL13) E3 ubiquitin ligase complex, at least composed of CUL3, KLHL9, KLHL13 and RBX1. Interacts with AURKB.

Its pathway is protein modification; protein ubiquitination. Functionally, substrate-specific adapter of a BCR (BTB-CUL3-RBX1) E3 ubiquitin-protein ligase complex required for mitotic progression and cytokinesis. The BCR(KLHL9-KLHL13) E3 ubiquitin ligase complex mediates the ubiquitination of AURKB and controls the dynamic behavior of AURKB on mitotic chromosomes and thereby coordinates faithful mitotic progression and completion of cytokinesis. This is Kelch-like protein 9 (Klhl9) from Mus musculus (Mouse).